Here is a 360-residue protein sequence, read N- to C-terminus: UDP-N-acetylglucosamine--N-acetylmuramyl-(pentapeptide) pyrophosphoryl-undecaprenol N-acetylglucosamine transferase (360 aa).

Residues 17-19 (TAG), N130, R166, S200, I247, and Q291 each bind UDP-N-acetyl-alpha-D-glucosamine.

It belongs to the glycosyltransferase 28 family. MurG subfamily.

It is found in the cell membrane. The catalysed reaction is di-trans,octa-cis-undecaprenyl diphospho-N-acetyl-alpha-D-muramoyl-L-alanyl-D-glutamyl-meso-2,6-diaminopimeloyl-D-alanyl-D-alanine + UDP-N-acetyl-alpha-D-glucosamine = di-trans,octa-cis-undecaprenyl diphospho-[N-acetyl-alpha-D-glucosaminyl-(1-&gt;4)]-N-acetyl-alpha-D-muramoyl-L-alanyl-D-glutamyl-meso-2,6-diaminopimeloyl-D-alanyl-D-alanine + UDP + H(+). It participates in cell wall biogenesis; peptidoglycan biosynthesis. Its function is as follows. Cell wall formation. Catalyzes the transfer of a GlcNAc subunit on undecaprenyl-pyrophosphoryl-MurNAc-pentapeptide (lipid intermediate I) to form undecaprenyl-pyrophosphoryl-MurNAc-(pentapeptide)GlcNAc (lipid intermediate II). The protein is UDP-N-acetylglucosamine--N-acetylmuramyl-(pentapeptide) pyrophosphoryl-undecaprenol N-acetylglucosamine transferase of Corynebacterium efficiens (strain DSM 44549 / YS-314 / AJ 12310 / JCM 11189 / NBRC 100395).